A 208-amino-acid polypeptide reads, in one-letter code: Protein-L-isoaspartate O-methyltransferase (208 aa).

Ser-59 is an active-site residue.

It belongs to the methyltransferase superfamily. L-isoaspartyl/D-aspartyl protein methyltransferase family.

It localises to the cytoplasm. The enzyme catalyses [protein]-L-isoaspartate + S-adenosyl-L-methionine = [protein]-L-isoaspartate alpha-methyl ester + S-adenosyl-L-homocysteine. Functionally, catalyzes the methyl esterification of L-isoaspartyl residues in peptides and proteins that result from spontaneous decomposition of normal L-aspartyl and L-asparaginyl residues. It plays a role in the repair and/or degradation of damaged proteins. The sequence is that of Protein-L-isoaspartate O-methyltransferase from Klebsiella pneumoniae subsp. pneumoniae (strain ATCC 700721 / MGH 78578).